The chain runs to 314 residues: tRNA dimethylallyltransferase (314 aa).

Position 10 to 17 (10 to 17) interacts with ATP; that stretch reads GPTGVGKT. 12–17 contacts substrate; sequence TGVGKT. The interaction with substrate tRNA stretch occupies residues 35–38; that stretch reads DSMQ.

Belongs to the IPP transferase family. In terms of assembly, monomer. Requires Mg(2+) as cofactor.

The enzyme catalyses adenosine(37) in tRNA + dimethylallyl diphosphate = N(6)-dimethylallyladenosine(37) in tRNA + diphosphate. Its function is as follows. Catalyzes the transfer of a dimethylallyl group onto the adenine at position 37 in tRNAs that read codons beginning with uridine, leading to the formation of N6-(dimethylallyl)adenosine (i(6)A). The sequence is that of tRNA dimethylallyltransferase from Finegoldia magna (strain ATCC 29328 / DSM 20472 / WAL 2508) (Peptostreptococcus magnus).